The sequence spans 518 residues: 2-isopropylmalate synthase (518 aa).

The Pyruvate carboxyltransferase domain maps to 5–267 (VIIFDTTLRD…STNIKHKEIY (263 aa)). Mn(2+) is bound by residues D14, H202, H204, and N238. The interval 392–518 (SLSFFSVQSI…KLKTLKKVNN (127 aa)) is regulatory domain.

The protein belongs to the alpha-IPM synthase/homocitrate synthase family. LeuA type 1 subfamily. In terms of assembly, homodimer. Requires Mn(2+) as cofactor.

Its subcellular location is the cytoplasm. It catalyses the reaction 3-methyl-2-oxobutanoate + acetyl-CoA + H2O = (2S)-2-isopropylmalate + CoA + H(+). It functions in the pathway amino-acid biosynthesis; L-leucine biosynthesis; L-leucine from 3-methyl-2-oxobutanoate: step 1/4. Catalyzes the condensation of the acetyl group of acetyl-CoA with 3-methyl-2-oxobutanoate (2-ketoisovalerate) to form 3-carboxy-3-hydroxy-4-methylpentanoate (2-isopropylmalate). The sequence is that of 2-isopropylmalate synthase from Buchnera aphidicola subsp. Schizaphis graminum (strain Sg).